Consider the following 780-residue polypeptide: Zinc finger and SCAN domain-containing protein 10 (780 aa).

Residues 1 to 38 (MLGESVPAAVEQEQLGEVKLEEEEAVSPEDPRRPESRL) are disordered. Residues 29-38 (EDPRRPESRL) are compositionally biased toward basic and acidic residues. Positions 56 to 126 (MGPRASLSRL…LLLEGIHREP (71 aa)) constitute an SCAN box domain. Disordered stretches follow at residues 153-237 (GCAS…SRDQ) and 255-324 (KAWP…GSLL). Phosphoserine occurs at positions 162 and 208. Polar residues predominate over residues 202-224 (SSKQPLSPGPQKTFQALQESSPQ). At threonine 268 the chain carries Phosphothreonine. Positions 268–280 (TPDKEEFKQEEPK) are enriched in basic and acidic residues. C2H2-type zinc fingers lie at residues 347–370 (FICA…LRSH), 376–398 (FLCL…MRTH), 404–426 (HACH…LLTH), 432–454 (FLCA…LLAH), 476–498 (VLCS…LRIH), 522–544 (FVCS…RRVH), 550–572 (FSCQ…QRVH), 578–600 (YACP…LLTH), 606–628 (HHCT…QRSH), 634–656 (CRCS…QRIH), 662–684 (HACD…RRSH), 690–712 (YSCQ…LATH), 724–746 (QECV…LLVH), and 752–774 (YSCT…LRTH). At glutamine 483 the chain carries N5-methylglutamine. A disordered region spans residues 492–520 (KRHLRIHARDKDRRSSEGSGSRRRDSDRR). The segment covering 498 to 520 (HARDKDRRSSEGSGSRRRDSDRR) has biased composition (basic and acidic residues).

Interacts with POU5F1/OCT4 and SOX2. Post-translationally, methylated at Gln-483 by N6AMT1.

It localises to the nucleus. Functionally, embryonic stem (ES) cell-specific transcription factor required to maintain ES cell pluripotency. Can both activate and /or repress expression of target genes, depending on the context. Specifically binds the 5'-[GA]CGCNNGCG[CT]-3' DNA consensus sequence. Regulates expression of POU5F1/OCT4, ZSCAN4 and ALYREF/THOC4. This Homo sapiens (Human) protein is Zinc finger and SCAN domain-containing protein 10 (ZSCAN10).